The following is a 555-amino-acid chain: Oxamate carbamoyltransferase subunit AllF (555 aa).

This sequence belongs to the AllF family. As to quaternary structure, the OXTCase is composed of 3 subunits, AllF, AllG and AllH. The cofactor is Mg(2+).

It catalyses the reaction oxamate + carbamoyl phosphate = N-carbamoyl-2-oxoglycine + phosphate. It functions in the pathway nitrogen metabolism; (S)-allantoin degradation. In terms of biological role, component of a carbamoyltransferase involved in the anaerobic nitrogen utilization via the assimilation of allantoin. Catalyzes the conversion of oxalurate (N-carbamoyl-2-oxoglycine) to oxamate and carbamoyl phosphate. This chain is Oxamate carbamoyltransferase subunit AllF, found in Escherichia coli (strain K12).